The primary structure comprises 668 residues: CLK4-associating serine/arginine rich protein (668 aa).

Position 101 is a phosphoserine (S101). 2 disordered regions span residues 173–232 (AEVE…GMAD) and 252–668 (AKAL…HYRH). A compositionally biased stretch (acidic residues) spans 182-214 (PEEEESPAEEESNSDEDEVIPDIDVEVDVDELN). Positions 265–283 (RRSRRQRREFREKRLRGRK) are enriched in basic residues. 2 positions are modified to phosphoserine: S285 and S294. A compositionally biased stretch (basic and acidic residues) spans 290–313 (ARRDSPTYDPYKRSPSESSSESRS). Residue T327 is modified to Phosphothreonine. A phosphoserine mark is found at S331 and S335. Composition is skewed to low complexity over residues 340–353 (AAAAAAAAASGAAP) and 378–395 (SSSSASRTSSSRSSSRSS). Positions 396 to 435 (SRSRRGYYRSGRHARSRSRSWSRSRSRSRRYSRSRSRGRR) are enriched in basic residues. Basic and acidic residues predominate over residues 436 to 446 (HSDGGSRDGHR). Basic residues predominate over residues 475–486 (RGARGPRHHSSS). Composition is skewed to low complexity over residues 487 to 510 (HSRSSWSLSPSRSRSVTRSGSRSQ) and 518 to 527 (QSHSQSQSHS). Position 541 is a phosphoserine (S541). Position 567 is a phosphothreonine (T567). The stretch at 579-641 (ALNRQFKADK…ERQYSRQSRS (63 aa)) forms a coiled coil. Basic and acidic residues-rich tracts occupy residues 584–611 (FKADKKAAQEKMIQQEHERQEREDELRA) and 619–635 (KERERREKEREEWERQY). A compositionally biased stretch (low complexity) spans 636–645 (SRQSRSPSPR). The segment covering 653 to 668 (SRRRSRSRSRSPHYRH) has biased composition (basic residues).

The protein belongs to the splicing factor SR family. Probably interacts with CLK4. In terms of processing, phosphorylated in vitro by CLK4. Highly expressed in brain. Expressed at intermediate level in lung and liver. In brain, it is expressed in the hippocampus, cerebellum and olfactory bulb.

The protein localises to the nucleus. The protein resides in the nucleoplasm. Its function is as follows. Probably functions as an alternative splicing regulator. May regulate the mRNA splicing of genes such as CLK1. May act by regulating members of the CLK kinase family. This is CLK4-associating serine/arginine rich protein (Clasrp) from Mus musculus (Mouse).